The following is an 84-amino-acid chain: Small ribosomal subunit protein uS17c (84 aa).

It belongs to the universal ribosomal protein uS17 family. Part of the 30S ribosomal subunit.

The protein resides in the plastid. It localises to the chloroplast. Functionally, one of the primary rRNA binding proteins, it binds specifically to the 5'-end of 16S ribosomal RNA. In Phaeodactylum tricornutum (strain CCAP 1055/1), this protein is Small ribosomal subunit protein uS17c (rps17).